Here is a 175-residue protein sequence, read N- to C-terminus: NADH-ubiquinone oxidoreductase chain 6 (175 aa).

Helical transmembrane passes span 1–21 (MMYM…GFSS), 26–46 (IYGG…VMGL), 47–67 (GGSF…LVVF), 87–107 (VILS…VWMI), and 152–172 (WLVI…IEIT).

Belongs to the complex I subunit 6 family.

It localises to the mitochondrion membrane. The enzyme catalyses a ubiquinone + NADH + 5 H(+)(in) = a ubiquinol + NAD(+) + 4 H(+)(out). Core subunit of the mitochondrial membrane respiratory chain NADH dehydrogenase (Complex I) that is believed to belong to the minimal assembly required for catalysis. Complex I functions in the transfer of electrons from NADH to the respiratory chain. The immediate electron acceptor for the enzyme is believed to be ubiquinone. The polypeptide is NADH-ubiquinone oxidoreductase chain 6 (MT-ND6) (Dasypus novemcinctus (Nine-banded armadillo)).